The sequence spans 327 residues: Phenylalanine--tRNA ligase alpha subunit (327 aa).

Glutamate 252 contacts Mg(2+).

It belongs to the class-II aminoacyl-tRNA synthetase family. Phe-tRNA synthetase alpha subunit type 1 subfamily. In terms of assembly, tetramer of two alpha and two beta subunits. Mg(2+) serves as cofactor.

It is found in the cytoplasm. It carries out the reaction tRNA(Phe) + L-phenylalanine + ATP = L-phenylalanyl-tRNA(Phe) + AMP + diphosphate + H(+). The protein is Phenylalanine--tRNA ligase alpha subunit of Aliivibrio fischeri (strain ATCC 700601 / ES114) (Vibrio fischeri).